A 513-amino-acid polypeptide reads, in one-letter code: Quiannulatic acid synthase (513 aa).

A helical transmembrane segment spans residues 14 to 34 (VFTFCNIILALASLVVAQCVY). N308 carries N-linked (GlcNAc...) asparagine glycosylation. Residue C477 coordinates heme.

Belongs to the cytochrome P450 family. Heme serves as cofactor.

It localises to the membrane. The catalysed reaction is quiannulatene + 3 reduced [NADPH--hemoprotein reductase] + 3 O2 = quiannulatate + 3 oxidized [NADPH--hemoprotein reductase] + 4 H2O + 4 H(+). It participates in secondary metabolite biosynthesis; terpenoid biosynthesis. Cytochrome P450 monooxygenase; part of the gene cluster that mediates the biosynthesis of the pentacyclic sesterterpene quiannulatic acid. The first step of the pathway is performed by the sesterterpene synthase (QS) that possesses both prenyl transferase and terpene cyclase activity, converting isopentenyl diphosphate and dimethylallyl diphosphate into geranylfarnesyl diphosphate (GFPP) and further converting GFPP into quiannulatene via an unprecedented cyclization mode which involves three rounds of hydride shifts and two successive C-C bond migrations to construct the 5-6-5-5-5 fused ring. The cytochrome P450 monooxygenase Qnn-P450 then oxidizes quiannulatene at C-19 in 3 successive reactions to afford quiannulatic acid. The chain is Quiannulatic acid synthase from Emericella variicolor (Aspergillus stellatus).